Consider the following 888-residue polypeptide: Translation initiation factor IF-2 (888 aa).

Disordered regions lie at residues 96–122 and 158–302; these read TTKQDESDAAGKRAAEDVSLRTAEAPE and ELKE…SAPT. 2 stretches are compositionally biased toward basic and acidic residues: residues 98-114 and 158-167; these read KQDESDAAGKRAAEDVS and ELKEKQEKRR. The segment covering 181 to 206 has biased composition (polar residues); sequence TQVQEPGSETAAVSGSVAATQPESTE. Residues 207-225 are compositionally biased toward low complexity; it reads TAAVTPSATITVTTQTTPA. Basic and acidic residues-rich tracts occupy residues 226 to 243 and 253 to 269; these read AKERAPQKPAVKPEEKGE and EAWKDEPVKRRESKARG. The tr-type G domain occupies 390 to 559; sequence SRAPVVTVMG…LLQAEVLELK (170 aa). Residues 399–406 are G1; the sequence is GHVDHGKT. 399-406 lines the GTP pocket; sequence GHVDHGKT. Residues 424–428 are G2; the sequence is GITQH. Residues 445–448 are G3; sequence DTPG. Residues 445–449 and 499–502 contribute to the GTP site; these read DTPGH and NKMD. The G4 stretch occupies residues 499–502; the sequence is NKMD. The interval 535–537 is G5; it reads SAK.

It belongs to the TRAFAC class translation factor GTPase superfamily. Classic translation factor GTPase family. IF-2 subfamily.

Its subcellular location is the cytoplasm. Its function is as follows. One of the essential components for the initiation of protein synthesis. Protects formylmethionyl-tRNA from spontaneous hydrolysis and promotes its binding to the 30S ribosomal subunits. Also involved in the hydrolysis of GTP during the formation of the 70S ribosomal complex. This is Translation initiation factor IF-2 from Nitrosomonas eutropha (strain DSM 101675 / C91 / Nm57).